The primary structure comprises 350 residues: MKLVDEAEIEVFAGNGGNGCIGFRREKFIPLGGPDGGDGGAGGSVYIRADENLNTLVDFRHDRIFKAQRGENGMGRQAYGKGGEDLTITVPVGTVIINVATDEIIGDLTQHGDRLLVAQGGRGGLGNMHFKSSTNRSPRQALPGEPGEERTLKLELKLLADVGLLGFPNAGKSTLIRAVSAATPKVADYPFTTLYPNLGVVKVENYRSFVIADIPGLIEGAADGAGLGAQFLRHLQRTRLLLHLVDISPMEGGVEGISPVEQVRAIERELEKHDPELLQKPRWLVLNKADLMFEDEAKAAAEQIVAELGWKEPWFLVSALGREGTFPIMSRIMAFFDRQKEDELEARNAL.

An Obg domain is found at M1–L159. The disordered stretch occupies residues N127 to G147. The OBG-type G domain maps to A160–D337. Residues G166–S173, F191–Y195, D213–G216, N287–D290, and S318–L320 contribute to the GTP site. S173 and T193 together coordinate Mg(2+).

The protein belongs to the TRAFAC class OBG-HflX-like GTPase superfamily. OBG GTPase family. As to quaternary structure, monomer. Mg(2+) serves as cofactor.

The protein resides in the cytoplasm. An essential GTPase which binds GTP, GDP and possibly (p)ppGpp with moderate affinity, with high nucleotide exchange rates and a fairly low GTP hydrolysis rate. Plays a role in control of the cell cycle, stress response, ribosome biogenesis and in those bacteria that undergo differentiation, in morphogenesis control. The polypeptide is GTPase Obg (Stenotrophomonas maltophilia (strain R551-3)).